A 169-amino-acid polypeptide reads, in one-letter code: Putative phosphoesterase SE_0715 (169 aa).

Catalysis depends on His-34, which acts as the Proton donor. 2 short sequence motifs (HXTX) span residues 34–37 and 115–118; these read HITI and HFTI. The active-site Proton acceptor is His-115.

Belongs to the 2H phosphoesterase superfamily. YjcG family.

In Staphylococcus epidermidis (strain ATCC 12228 / FDA PCI 1200), this protein is Putative phosphoesterase SE_0715.